We begin with the raw amino-acid sequence, 324 residues long: Phosphate transport system permease protein PstC 2 (324 aa).

6 helical membrane-spanning segments follow: residues 30–50, 90–110, 125–145, 174–194, 237–257, and 290–310; these read ASAAGSTIVIAILLIAIFLLV, LSSITALVLAVPVAVGIAVFL, MVDLLAAVPSIIFGLWGIFVL, AGGGTIFTAGIVLSVMILPIV, VAASMLGLGRALGETVAVLVI, and PLPTGAYISAGFALFVLTFLV. The ABC transmembrane type-1 domain maps to 85-314; it reads FMVTALSSIT…VLTFLVNAAA (230 aa).

Belongs to the binding-protein-dependent transport system permease family. CysTW subfamily.

Its subcellular location is the cell membrane. Functionally, part of the binding-protein-dependent transport system for phosphate; probably responsible for the translocation of the substrate across the membrane. In Mycobacterium bovis (strain ATCC BAA-935 / AF2122/97), this protein is Phosphate transport system permease protein PstC 2 (pstC2).